The following is a 944-amino-acid chain: MSANSVFQQLWDKAQCTFSTKLNELAPFSEREQQFFAFSPFATEHLRVNPHWLTEIRQTPPVSDEWQNYSSQLKQQLTHVDNEDDLMAILRQFRHQQLVRIAWSQFFQLCDTPCTLKQLSVLAETLISVAKDKLYQQCCQQWGTPCDREGKPQPLLILGMGKLGGLELNFSSDIDLIFAYPENGVTQGGRRELDNAQFFTRLGQKLIKVLDQHTMDGFVYRVDMRLRPFGESGPLVMSFAALEDYYQEQGRDWERYAMVKARVLGAEKKEYCQILRQMLRPFVYRRYIDFSVIQSLRNMKSMISREVRRRGMIDNIKLGAGGIREIEFITQVFQLIRGGREPELQSHSLLTVLNVIAKLELLSAQETSQLADSYLFLRRLENLLQSIADQQTQTLPDNLEDKARLAFAMGFDDWQMLYQQINQKMQAVSVIFTQLIGEDDENEDEEDVSEFKRLWLLGRLPDSATLFHQGLTAEDRQAICQTLQLFRQDISKRTIGPRGRDVLDALMPKLLAKVCLQPQALVILQRITPLLLGIVSRTTYLELMQESDEVLTHVVRLCAASPMIAEQLTRHPLLLDELLDPHSLYQPLPLNAYQDELRQYLLRVPEEDEEQRLEALRQFKQAQLLRIAAEDIAGVLPVMKVSDHLTYLAEAIIHAVVHQAWSYMVKRYGEPAHLAQRDGLGFAVVGYGKLGGWELGYSSDLDLVFLLDCPMNILTTGAKQIDARQFYLRLAQRIIHLFSTRTSSGVLYEVDARLRPSGESGMLVSTIQAFDEYQKNEAWTWEHQALIRARMIYGDDQLQQMFARTRHETLCLARNATVLQQEVREMRQKMVQHLAPTQSNTFDLKASSGGITDIEFIAQYLVLRFSHQYPALTRWSDNVRILELMAKYQVMSEQEAQLLTQAYVTLRNELHHLALQTLPAVVDGDCFITERQWVLSSKQKWLDE.

Residues 1-440 (MSANSVFQQL…IFTQLIGEDD (440 aa)) form an adenylyl removase region. The adenylyl transferase stretch occupies residues 448–944 (VSEFKRLWLL…LSSKQKWLDE (497 aa)).

The protein belongs to the GlnE family. The cofactor is Mg(2+).

The enzyme catalyses [glutamine synthetase]-O(4)-(5'-adenylyl)-L-tyrosine + phosphate = [glutamine synthetase]-L-tyrosine + ADP. It catalyses the reaction [glutamine synthetase]-L-tyrosine + ATP = [glutamine synthetase]-O(4)-(5'-adenylyl)-L-tyrosine + diphosphate. Involved in the regulation of glutamine synthetase GlnA, a key enzyme in the process to assimilate ammonia. When cellular nitrogen levels are high, the C-terminal adenylyl transferase (AT) inactivates GlnA by covalent transfer of an adenylyl group from ATP to specific tyrosine residue of GlnA, thus reducing its activity. Conversely, when nitrogen levels are low, the N-terminal adenylyl removase (AR) activates GlnA by removing the adenylyl group by phosphorolysis, increasing its activity. The regulatory region of GlnE binds the signal transduction protein PII (GlnB) which indicates the nitrogen status of the cell. In Proteus mirabilis (strain HI4320), this protein is Bifunctional glutamine synthetase adenylyltransferase/adenylyl-removing enzyme.